A 184-amino-acid polypeptide reads, in one-letter code: MTIKSDRWIQVMAREYGMIEPFVAEQVRGGIISYGLSSYGYDMRVADEFKVFTNVFNTLVDPKHFDPRSFVDIRGDYCDIPPNSFALARSVEYFRIPRNVLCIVLGKSTIARCGIIVNVTPLEPEWCGYVTIEISNTTPLPARIYANEGIAQVLFLESDEPPLVSYADKAGKYQNQTGVVPPRL.

Residue 107 to 112 coordinates dCTP; that stretch reads KSTIAR. The Proton donor/acceptor role is filled by glutamate 133. DCTP contacts are provided by glutamine 152, tyrosine 166, and glutamine 176.

This sequence belongs to the dCTP deaminase family. Homotrimer.

It carries out the reaction dCTP + H2O + H(+) = dUTP + NH4(+). The protein operates within pyrimidine metabolism; dUMP biosynthesis; dUMP from dCTP (dUTP route): step 1/2. Catalyzes the deamination of dCTP to dUTP. The protein is dCTP deaminase of Roseiflexus castenholzii (strain DSM 13941 / HLO8).